A 115-amino-acid chain; its full sequence is Large ribosomal subunit protein bL19 (115 aa).

This sequence belongs to the bacterial ribosomal protein bL19 family.

Its function is as follows. This protein is located at the 30S-50S ribosomal subunit interface and may play a role in the structure and function of the aminoacyl-tRNA binding site. This chain is Large ribosomal subunit protein bL19, found in Buchnera aphidicola subsp. Acyrthosiphon pisum (strain 5A).